A 216-amino-acid polypeptide reads, in one-letter code: Protein-L-isoaspartate O-methyltransferase (216 aa).

S60 is a catalytic residue.

It belongs to the methyltransferase superfamily. L-isoaspartyl/D-aspartyl protein methyltransferase family.

Its subcellular location is the cytoplasm. The enzyme catalyses [protein]-L-isoaspartate + S-adenosyl-L-methionine = [protein]-L-isoaspartate alpha-methyl ester + S-adenosyl-L-homocysteine. Catalyzes the methyl esterification of L-isoaspartyl residues in peptides and proteins that result from spontaneous decomposition of normal L-aspartyl and L-asparaginyl residues. It plays a role in the repair and/or degradation of damaged proteins. The sequence is that of Protein-L-isoaspartate O-methyltransferase from Methanococcus aeolicus (strain ATCC BAA-1280 / DSM 17508 / OCM 812 / Nankai-3).